The following is a 231-amino-acid chain: Uracil phosphoribosyltransferase (231 aa).

38–42 (KGLVR) serves as a coordination point for GTP. 5-phospho-alpha-D-ribose 1-diphosphate contacts are provided by residues Arg-87, Arg-112, and 140-148 (DPMIATGST). Uracil contacts are provided by residues Ile-203 and 208–210 (GDA). Asp-209 serves as a coordination point for 5-phospho-alpha-D-ribose 1-diphosphate.

It belongs to the UPRTase family. It depends on Mg(2+) as a cofactor.

The catalysed reaction is UMP + diphosphate = 5-phospho-alpha-D-ribose 1-diphosphate + uracil. Its pathway is pyrimidine metabolism; UMP biosynthesis via salvage pathway; UMP from uracil: step 1/1. Allosterically activated by GTP. Its function is as follows. Catalyzes the conversion of uracil and 5-phospho-alpha-D-ribose 1-diphosphate (PRPP) to UMP and diphosphate. In Methanococcus maripaludis (strain C6 / ATCC BAA-1332), this protein is Uracil phosphoribosyltransferase.